The primary structure comprises 235 residues: uncharacterized protein (235 aa).

Disordered stretches follow at residues 1 to 47 (MSHK…QSTN) and 78 to 128 (QEHH…KQPQ). Over residues 20–33 (HPPGQSLSSISWSP) the composition is skewed to polar residues. Over residues 84 to 98 (QQQQQQRQNIRSQNS) the composition is skewed to low complexity. A compositionally biased stretch (polar residues) spans 106–128 (VQESQWTSSASNSSLKKQEKQPQ).

This is an uncharacterized protein from Saccharomyces cerevisiae (strain ATCC 204508 / S288c) (Baker's yeast).